A 276-amino-acid chain; its full sequence is Large ribosomal subunit protein uL2 (276 aa).

2 disordered regions span residues 35–55 and 222–276; these read APLH…RHQG and GSVM…RRKK. The segment covering 258–276 has biased composition (basic residues); that stretch reads KTRKKNKHSDKYIVRRRKK.

It belongs to the universal ribosomal protein uL2 family. As to quaternary structure, part of the 50S ribosomal subunit. Forms a bridge to the 30S subunit in the 70S ribosome.

One of the primary rRNA binding proteins. Required for association of the 30S and 50S subunits to form the 70S ribosome, for tRNA binding and peptide bond formation. It has been suggested to have peptidyltransferase activity; this is somewhat controversial. Makes several contacts with the 16S rRNA in the 70S ribosome. The sequence is that of Large ribosomal subunit protein uL2 from Shouchella clausii (strain KSM-K16) (Alkalihalobacillus clausii).